The primary structure comprises 133 residues: Ribonuclease P protein component (133 aa).

It belongs to the RnpA family. In terms of assembly, consists of a catalytic RNA component (M1 or rnpB) and a protein subunit.

It catalyses the reaction Endonucleolytic cleavage of RNA, removing 5'-extranucleotides from tRNA precursor.. Its function is as follows. RNaseP catalyzes the removal of the 5'-leader sequence from pre-tRNA to produce the mature 5'-terminus. It can also cleave other RNA substrates such as 4.5S RNA. The protein component plays an auxiliary but essential role in vivo by binding to the 5'-leader sequence and broadening the substrate specificity of the ribozyme. The chain is Ribonuclease P protein component from Pseudomonas fluorescens (strain Pf0-1).